The primary structure comprises 135 residues: UPF0102 protein Mkms_2031 (135 aa).

The protein belongs to the UPF0102 family.

The protein is UPF0102 protein Mkms_2031 of Mycobacterium sp. (strain KMS).